A 292-amino-acid chain; its full sequence is tRNA(Ile)-lysidine synthase (292 aa).

Position 32–37 (32–37) interacts with ATP; it reads SGGADS.

Belongs to the tRNA(Ile)-lysidine synthase family.

The protein localises to the cytoplasm. It carries out the reaction cytidine(34) in tRNA(Ile2) + L-lysine + ATP = lysidine(34) in tRNA(Ile2) + AMP + diphosphate + H(+). Functionally, ligates lysine onto the cytidine present at position 34 of the AUA codon-specific tRNA(Ile) that contains the anticodon CAU, in an ATP-dependent manner. Cytidine is converted to lysidine, thus changing the amino acid specificity of the tRNA from methionine to isoleucine. The sequence is that of tRNA(Ile)-lysidine synthase from Corynebacterium diphtheriae (strain ATCC 700971 / NCTC 13129 / Biotype gravis).